The primary structure comprises 559 residues: Phenylalanine--tRNA ligase beta subunit (559 aa).

A B5 domain is found at 274–350; sequence FEPKIIDVHT…LGYGFNELPA (77 aa). Mg(2+) is bound by residues Asp328, Asp334, Glu337, and Asn338.

It belongs to the phenylalanyl-tRNA synthetase beta subunit family. Type 2 subfamily. As to quaternary structure, tetramer of two alpha and two beta subunits. Mg(2+) is required as a cofactor.

It is found in the cytoplasm. It carries out the reaction tRNA(Phe) + L-phenylalanine + ATP = L-phenylalanyl-tRNA(Phe) + AMP + diphosphate + H(+). The protein is Phenylalanine--tRNA ligase beta subunit of Methanosphaera stadtmanae (strain ATCC 43021 / DSM 3091 / JCM 11832 / MCB-3).